We begin with the raw amino-acid sequence, 365 residues long: Probable galacturonosyltransferase-like 10 (365 aa).

The Cytoplasmic portion of the chain corresponds to 1–10 (MMSGSRLASR). The chain crosses the membrane as a helical; Signal-anchor for type II membrane protein span at residues 11–31 (LIIIFSIISTSFFTVESIRLF). Over 32–365 (PDSFDDASSD…LQYNQELEIL (334 aa)) the chain is Lumenal. An N-linked (GlcNAc...) asparagine glycan is attached at Asn209.

This sequence belongs to the glycosyltransferase 8 family.

The protein localises to the golgi apparatus membrane. It participates in glycan metabolism; pectin biosynthesis. May be involved in pectin and/or xylans biosynthesis in cell walls. The sequence is that of Probable galacturonosyltransferase-like 10 (GATL10) from Arabidopsis thaliana (Mouse-ear cress).